Reading from the N-terminus, the 528-residue chain is Chaperonin GroEL, chloroplastic (528 aa).

ATP-binding positions include 29–32, 86–90, glycine 414, and aspartate 496; these read TLGP and DGTTT.

This sequence belongs to the chaperonin (HSP60) family. In terms of assembly, forms a cylinder of 14 subunits composed of two heptameric rings stacked back-to-back. Interacts with the co-chaperonin GroES.

The protein localises to the plastid. Its subcellular location is the chloroplast. It carries out the reaction ATP + H2O + a folded polypeptide = ADP + phosphate + an unfolded polypeptide.. Functionally, together with its co-chaperonin GroES, plays an essential role in assisting protein folding. The GroEL-GroES system forms a nano-cage that allows encapsulation of the non-native substrate proteins and provides a physical environment optimized to promote and accelerate protein folding. This chain is Chaperonin GroEL, chloroplastic, found in Porphyra purpurea (Red seaweed).